The primary structure comprises 409 residues: Putative competence-damage inducible protein (409 aa).

Belongs to the CinA family.

This is Putative competence-damage inducible protein from Clostridium botulinum (strain Okra / Type B1).